The sequence spans 638 residues: Ubiquilin-2 (638 aa).

Positions 1 to 26 (MAENGESSGPPRPSRGPAAAPGAASP) are enriched in low complexity. 2 disordered regions span residues 1–31 (MAEN…AEPK) and 107–158 (RPQG…SSFG). Ala2 is modified (N-acetylalanine). A Phosphoserine modification is found at Ser25. The region spanning 33–107 (IKVTVKTPKE…VHLVIKSQNR (75 aa)) is the Ubiquitin-like domain. Over residues 112 to 158 (ATTQPSTTAGTSTTTTTTTTAAAPAATTSSAPRSSSTPTTTNSSSFG) the composition is skewed to low complexity. STI1 domains follow at residues 189 to 217 (SPEM…QLIM) and 219 to 258 (NPQM…MQEM). The interval 298-364 (FGGNPFATVG…SGSSSSSTTA (67 aa)) is disordered. Positions 305–316 (TVGSSSTSGEGT) are enriched in low complexity. Residues 327–336 (LPNPWAPPPT) show a composition bias toward pro residues. Residues 337–364 (TQTAATTTTTTTTSSGSGSGSSSSSTTA) show a composition bias toward low complexity. 2 consecutive STI1 domains span residues 393–440 (NPQL…QEQM) and 444–476 (LPNF…QQGL). 11 consecutive repeat copies span residues 505-507 (PVG), 508-510 (PVT), 511-513 (PIG), 514-516 (PIG), 517-519 (PIV), 520-522 (PFT), 523-525 (PIG), 526-528 (PIG), 529-531 (PIG), 532-533 (PT), and 535-537 (PAS). The interval 505 to 537 (PVGPVTPIGPIGPIVPFTPIGPIGPIGPTGPAS) is 11 X 3 AA tandem repeats P-X-X. Positions 528-570 (GPIGPTGPASSPGSTGTGIPPATTVSSSAPTETISPTSESGPN) are disordered. Low complexity predominate over residues 533 to 551 (TGPASSPGSTGTGIPPATT). Polar residues predominate over residues 552–570 (VSSSAPTETISPTSESGPN). The region spanning 589–635 (PPNPEVRFQQQLEQLNAMGFLNREANLQALIATGGDINAAIERLLGS) is the UBA domain.

Homodimer. Forms heterodimer with UBQLN1. Binds UBE3A and BTRC. Interacts with the 19S proteasome subunit. Interacts with C9orf72. Binds CD47. Interacts with HNRNPA1 and HNRNPU. Found in a complex with UBQLN1 and MAP1LC3A/B/C. Interacts with EPS15, EPN1 and EPN2. Interacts with HERPUD1. Interacts with RAD23A. Interacts with TARDBP. Interacts (via C-terminus) with FAF2 (via N-terminus). Interacts with UBQLN4. In terms of processing, degraded during macroautophagy. In terms of tissue distribution, highly expressed in smooth muscle. Expression in other tissues is very low.

It localises to the cytoplasm. It is found in the nucleus. The protein localises to the membrane. The protein resides in the cytoplasmic vesicle. Its subcellular location is the autophagosome. Its function is as follows. Plays an important role in the regulation of different protein degradation mechanisms and pathways including ubiquitin-proteasome system (UPS), autophagy and the endoplasmic reticulum-associated protein degradation (ERAD) pathway. Mediates the proteasomal targeting of misfolded or accumulated proteins for degradation by binding (via UBA domain) to their polyubiquitin chains and by interacting (via ubiquitin-like domain) with the subunits of the proteasome. Plays a role in the ERAD pathway via its interaction with ER-localized proteins FAF2/UBXD8 and HERPUD1 and may form a link between the polyubiquitinated ERAD substrates and the proteasome. Involved in the regulation of macroautophagy and autophagosome formation; required for maturation of autophagy-related protein LC3 from the cytosolic form LC3-I to the membrane-bound form LC3-II and may assist in the maturation of autophagosomes to autolysosomes by mediating autophagosome-lysosome fusion. Negatively regulates the endocytosis of GPCR receptors: AVPR2 and ADRB2, by specifically reducing the rate at which receptor-arrestin complexes concentrate in clathrin-coated pits (CCPs). Links CD47 to vimentin-containing intermediate filaments of the cytoskeleton. The protein is Ubiquilin-2 (Ubqln2) of Mus musculus (Mouse).